The primary structure comprises 349 residues: NADH-quinone oxidoreductase subunit H (349 aa).

Helical transmembrane passes span 20 to 42 (WTLI…LTYF), 88 to 108 (GIFI…WAVV), 123 to 143 (LLYI…SGWA), 167 to 187 (MGFS…VEIV), 202 to 222 (FLSW…ISGV), 249 to 269 (GMAF…VSAL), 284 to 304 (FLPD…FLFL), and 325 to 345 (VFVP…MSPL).

Belongs to the complex I subunit 1 family. In terms of assembly, NDH-1 is composed of 14 different subunits. Subunits NuoA, H, J, K, L, M, N constitute the membrane sector of the complex.

It localises to the cell inner membrane. It catalyses the reaction a quinone + NADH + 5 H(+)(in) = a quinol + NAD(+) + 4 H(+)(out). In terms of biological role, NDH-1 shuttles electrons from NADH, via FMN and iron-sulfur (Fe-S) centers, to quinones in the respiratory chain. The immediate electron acceptor for the enzyme in this species is believed to be ubiquinone. Couples the redox reaction to proton translocation (for every two electrons transferred, four hydrogen ions are translocated across the cytoplasmic membrane), and thus conserves the redox energy in a proton gradient. This subunit may bind ubiquinone. This Dechloromonas aromatica (strain RCB) protein is NADH-quinone oxidoreductase subunit H.